The primary structure comprises 179 residues: MSKDLEVAGRYANALFQVAQDKDLVDVFSEELTELKAALNANKDFVKLLENPTFTTEQKKNLASAVFEKINPTLRDFIYLLIDRSREDYLSVIADVYQKRVNDLRGVADADVYSVVPLSEQELTALSRVFAAKMNKTKLNIQNHIDKSLLGGVKVVIGTRIYDDSLKTKLKDMERQIKA.

Belongs to the ATPase delta chain family. F-type ATPases have 2 components, F(1) - the catalytic core - and F(0) - the membrane proton channel. F(1) has five subunits: alpha(3), beta(3), gamma(1), delta(1), epsilon(1). F(0) has three main subunits: a(1), b(2) and c(10-14). The alpha and beta chains form an alternating ring which encloses part of the gamma chain. F(1) is attached to F(0) by a central stalk formed by the gamma and epsilon chains, while a peripheral stalk is formed by the delta and b chains.

Its subcellular location is the cell membrane. Functionally, f(1)F(0) ATP synthase produces ATP from ADP in the presence of a proton or sodium gradient. F-type ATPases consist of two structural domains, F(1) containing the extramembraneous catalytic core and F(0) containing the membrane proton channel, linked together by a central stalk and a peripheral stalk. During catalysis, ATP synthesis in the catalytic domain of F(1) is coupled via a rotary mechanism of the central stalk subunits to proton translocation. In terms of biological role, this protein is part of the stalk that links CF(0) to CF(1). It either transmits conformational changes from CF(0) to CF(1) or is implicated in proton conduction. This Listeria innocua serovar 6a (strain ATCC BAA-680 / CLIP 11262) protein is ATP synthase subunit delta.